The following is a 588-amino-acid chain: Aspartate--tRNA ligase (588 aa).

Residue E172 coordinates L-aspartate. Positions 196–199 (QLFK) are aspartate. Position 218 (R218) interacts with L-aspartate. Residues 218 to 220 (RDE) and Q227 contribute to the ATP site. H449 contacts L-aspartate. E483 contacts ATP. R490 provides a ligand contact to L-aspartate. 535–538 (GLDR) contributes to the ATP binding site.

This sequence belongs to the class-II aminoacyl-tRNA synthetase family. Type 1 subfamily. In terms of assembly, homodimer.

Its subcellular location is the cytoplasm. The catalysed reaction is tRNA(Asp) + L-aspartate + ATP = L-aspartyl-tRNA(Asp) + AMP + diphosphate. Its function is as follows. Catalyzes the attachment of L-aspartate to tRNA(Asp) in a two-step reaction: L-aspartate is first activated by ATP to form Asp-AMP and then transferred to the acceptor end of tRNA(Asp). The polypeptide is Aspartate--tRNA ligase (Histophilus somni (strain 2336) (Haemophilus somnus)).